The chain runs to 206 residues: MGSSEQELTAIVRDLGCGPYFLGTFDKRFPGFVSRDRLSCAIVNTAGRETGGVHWLAFGWNPKSHTCYLFDPFGFSDQRLKQIYQFEYESLLRRSALAATKDRCVTLEKSTQTVQGPFSAACGLFCCMFLHAFTHWPDHPMDKNPTMDLLTGVPNCMLQSPQVVGTLQRNQNELYKFLNNLSPYFRHNRERIEKATSFTKMQNGLK.

Catalysis depends on residues His-54, Asp-71, and Cys-122.

The protein belongs to the peptidase C5 family. As to quaternary structure, interacts with protease cofactor pVI-C; this interaction is necessary for protease activation.

The protein resides in the virion. It is found in the host nucleus. It carries out the reaction Cleaves proteins of the adenovirus and its host cell at two consensus sites: -Yaa-Xaa-Gly-Gly-|-Xaa- and -Yaa-Xaa-Gly-Xaa-|-Gly- (in which Yaa is Met, Ile or Leu, and Xaa is any amino acid).. Its activity is regulated as follows. Requires DNA and protease cofactor for maximal activation. Inside nascent virions, becomes partially activated by binding to the viral DNA, allowing it to cleave the cofactor that binds to the protease and fully activates it. Actin, like the viral protease cofactor, seems to act as a cofactor in the cleavage of cytokeratin 18 and of actin itself. Its function is as follows. Cleaves viral precursor proteins (pTP, pIIIa, pVI, pVII, pVIII, and pX) inside newly assembled particles giving rise to mature virions. Protease complexed to its cofactor slides along the viral DNA to specifically locate and cleave the viral precursors. Mature virions have a weakened organization compared to the unmature virions, thereby facilitating subsequent uncoating. Without maturation, the particle lacks infectivity and is unable to uncoat. Late in adenovirus infection, in the cytoplasm, may participate in the cytoskeleton destruction. Cleaves host cell cytoskeletal keratins K7 and K18. The chain is Protease from Homo sapiens (Human).